Here is a 556-residue protein sequence, read N- to C-terminus: Zinc finger protein 18 (556 aa).

Positions 41–123 constitute an SCAN box domain; the sequence is RQLFRQFRYQ…TLVESLKGEP (83 aa). The interval 169–195 is disordered; the sequence is QDLPLQNSSSATGELLSHGVKEESDME. The region spanning 218-291 is the KRAB domain; it reads ELGTAVLPPL…HLHGAEKMAR (74 aa). C2H2-type zinc fingers lie at residues 415–437, 443–465, 471–493, 499–521, and 527–549; these read PTCRECGKTFYRNSQLVFHQRTH, FHCHICKKAFLRSSDFVKHQRTH, CKCDYCGKGFSDFSGLRHHEKIH, YKCPLCEKSFIQRSNFNRHQRVH, and YKCTHCGKQFSWSSSLDKHQRSH.

Belongs to the krueppel C2H2-type zinc-finger protein family.

Its subcellular location is the nucleus. In terms of biological role, may be involved in transcriptional regulation. This is Zinc finger protein 18 (Znf18) from Mus musculus (Mouse).